A 427-amino-acid polypeptide reads, in one-letter code: Adenylosuccinate synthetase (427 aa).

GTP-binding positions include 12 to 18 (GDEGKGK) and 40 to 42 (GHT). The Proton acceptor role is filled by Asp-13. The Mg(2+) site is built by Asp-13 and Gly-40. IMP-binding positions include 13-16 (DEGK), 38-41 (NAGH), Thr-128, Arg-142, Gln-223, Thr-238, and Arg-302. The Proton donor role is filled by His-41. Position 298–304 (298–304 (TTTGRAR)) interacts with substrate. Residues Arg-304, 330–332 (KLD), and 412–414 (AVG) each bind GTP.

It belongs to the adenylosuccinate synthetase family. Homodimer. Mg(2+) serves as cofactor.

The protein resides in the cytoplasm. It catalyses the reaction IMP + L-aspartate + GTP = N(6)-(1,2-dicarboxyethyl)-AMP + GDP + phosphate + 2 H(+). It participates in purine metabolism; AMP biosynthesis via de novo pathway; AMP from IMP: step 1/2. In terms of biological role, plays an important role in the de novo pathway of purine nucleotide biosynthesis. Catalyzes the first committed step in the biosynthesis of AMP from IMP. The sequence is that of Adenylosuccinate synthetase from Desulfitobacterium hafniense (strain Y51).